A 111-amino-acid chain; its full sequence is Universal stress protein B (111 aa).

The next 2 helical transmembrane spans lie at 1 to 21 (MFSTIALFWALCLVCIINMMR) and 90 to 110 (FILTSSLSGLVVICLISMLIW).

This sequence belongs to the universal stress protein B family.

It localises to the cell inner membrane. This chain is Universal stress protein B, found in Photorhabdus laumondii subsp. laumondii (strain DSM 15139 / CIP 105565 / TT01) (Photorhabdus luminescens subsp. laumondii).